A 485-amino-acid polypeptide reads, in one-letter code: D-alanine--D-alanyl carrier protein ligase (485 aa).

144 to 145 is an ATP binding site; that stretch reads TS. Aspartate 189 is a binding site for D-alanine. ATP is bound at residue 284–289; it reads NTYGPT. Valine 293 is a D-alanine binding site. ATP-binding residues include aspartate 365 and lysine 473. Lysine 473 contributes to the D-alanine binding site.

The protein belongs to the ATP-dependent AMP-binding enzyme family. DltA subfamily.

It localises to the cytoplasm. The enzyme catalyses holo-[D-alanyl-carrier protein] + D-alanine + ATP = D-alanyl-[D-alanyl-carrier protein] + AMP + diphosphate. It participates in cell wall biogenesis; lipoteichoic acid biosynthesis. Its function is as follows. Catalyzes the first step in the D-alanylation of lipoteichoic acid (LTA), the activation of D-alanine and its transfer onto the D-alanyl carrier protein (Dcp) DltC. In an ATP-dependent two-step reaction, forms a high energy D-alanyl-AMP intermediate, followed by transfer of the D-alanyl residue as a thiol ester to the phosphopantheinyl prosthetic group of the Dcp. D-alanylation of LTA plays an important role in modulating the properties of the cell wall in Gram-positive bacteria, influencing the net charge of the cell wall. In Staphylococcus epidermidis (strain ATCC 35984 / DSM 28319 / BCRC 17069 / CCUG 31568 / BM 3577 / RP62A), this protein is D-alanine--D-alanyl carrier protein ligase.